A 485-amino-acid chain; its full sequence is Dipeptide and tripeptide permease C (485 aa).

Residues 1–12 (MKTPSQPRAIYY) are Cytoplasmic-facing. The chain crosses the membrane as a helical span at residues 13-33 (IVAIQIWEYFSFYGMRALLIL). The Periplasmic portion of the chain corresponds to 34–46 (YLTHQLGFDDNHA). A helical membrane pass occupies residues 47-67 (ISLFSAYASLVYVTPILGGWL). Residues 68 to 70 (ADR) lie on the Cytoplasmic side of the membrane. Residues 71-93 (LLGNRTAVIAGALLMTLGHVVLG) traverse the membrane as a helical segment. Residues 94–102 (IDTNSTFSL) are Periplasmic-facing. Residues 103–125 (YLALAIIICGYGLFKSNISCLLG) form a helical membrane-spanning segment. Over 126–140 (ELYDENDHRRDGGFS) the chain is Cytoplasmic. Residues 141-161 (LLYAAGNIGSIAAPIACGLAA) form a helical membrane-spanning segment. Residues 162 to 164 (QWY) are Periplasmic-facing. The chain crosses the membrane as a helical span at residues 165–185 (GWHVGFALAGGGMFIGLLIFL). Over 186–208 (SGHRHFQSTRSMDKKALTSVKFA) the chain is Cytoplasmic. Residues 209–229 (LPVWSWLVVMLCLAPVFFTLL) form a helical membrane-spanning segment. The Periplasmic portion of the chain corresponds to 230 to 234 (LENDW). A helical transmembrane segment spans residues 235–255 (SGYLLAIVCLIAAQIIARMMI). Over 256-262 (KFPEHRR) the chain is Cytoplasmic. The helical transmembrane segment at 263–283 (ALWQIVLLMFVGTLFWVLAQQ) threads the bilayer. At 284-307 (GGSTISLFIDRFVNRQAFNIEVPT) the chain is on the periplasmic side. The helical transmembrane segment at 308 to 328 (ALFQSVNAIAVMLAGVVLAWL) threads the bilayer. The Cytoplasmic segment spans residues 329–340 (ASPESRGNSTLR). The helical transmembrane segment at 341 to 361 (VWLKFAFGLLLMACGFMLLAF) threads the bilayer. The Periplasmic segment spans residues 362–375 (DARHAAADGQASMG). A helical transmembrane segment spans residues 376–396 (VMISGLALMGFAELFIDPVAI). The Cytoplasmic portion of the chain corresponds to 397–406 (AQITRLKMSG). A helical transmembrane segment spans residues 407–427 (VLTGIYMLATGAVANWLAGVV). The Periplasmic portion of the chain corresponds to 428–446 (AQQTTESQISGMAIAAYQR). A helical transmembrane segment spans residues 447-467 (FFSQMGEWTLACVAIIVVLAF). The Cytoplasmic segment spans residues 468–485 (ATRFLFSTPTNMIQESND).

This sequence belongs to the major facilitator superfamily. Proton-dependent oligopeptide transporter (POT/PTR) (TC 2.A.17) family. Monomer.

It is found in the cell inner membrane. Its function is as follows. Proton-dependent permease that transports di- and tripeptides. Shows significantly higher specificity towards dipeptides than tripeptides. Has a preference for dipeptides with a C-terminal Lys residue. Can bind Ala-Lys, Lys-Ala, Ala-Ala. Can also transport alanine and trialanine. This is Dipeptide and tripeptide permease C from Escherichia coli (strain K12).